Reading from the N-terminus, the 294-residue chain is Glyceraldehyde-3-phosphate dehydrogenase (294 aa).

Residues Asp19, Arg63, and Thr105 each contribute to the NAD(+) site. D-glyceraldehyde 3-phosphate-binding positions include 134–136 (SCT) and Thr165. The active-site Nucleophile is the Cys135. Lys177 is modified (N6-acetyllysine). D-glyceraldehyde 3-phosphate is bound by residues 194-195 (TG) and Arg217. N6-acetyllysine is present on Lys234.

The protein belongs to the glyceraldehyde-3-phosphate dehydrogenase family. Homotetramer.

The protein localises to the cytoplasm. The catalysed reaction is D-glyceraldehyde 3-phosphate + phosphate + NAD(+) = (2R)-3-phospho-glyceroyl phosphate + NADH + H(+). Its pathway is carbohydrate degradation; glycolysis; pyruvate from D-glyceraldehyde 3-phosphate: step 1/5. Its function is as follows. Catalyzes the oxidative phosphorylation of glyceraldehyde 3-phosphate (G3P) to 1,3-bisphosphoglycerate (BPG) using the cofactor NAD. The first reaction step involves the formation of a hemiacetal intermediate between G3P and a cysteine residue, and this hemiacetal intermediate is then oxidized to a thioester, with concomitant reduction of NAD to NADH. The reduced NADH is then exchanged with the second NAD, and the thioester is attacked by a nucleophilic inorganic phosphate to produce BPG. This chain is Glyceraldehyde-3-phosphate dehydrogenase (gap), found in Pseudescherichia vulneris (Escherichia vulneris).